Here is a 234-residue protein sequence, read N- to C-terminus: 2-C-methyl-D-erythritol 4-phosphate cytidylyltransferase (234 aa).

It belongs to the IspD/TarI cytidylyltransferase family. IspD subfamily.

The enzyme catalyses 2-C-methyl-D-erythritol 4-phosphate + CTP + H(+) = 4-CDP-2-C-methyl-D-erythritol + diphosphate. The protein operates within isoprenoid biosynthesis; isopentenyl diphosphate biosynthesis via DXP pathway; isopentenyl diphosphate from 1-deoxy-D-xylulose 5-phosphate: step 2/6. In terms of biological role, catalyzes the formation of 4-diphosphocytidyl-2-C-methyl-D-erythritol from CTP and 2-C-methyl-D-erythritol 4-phosphate (MEP). The protein is 2-C-methyl-D-erythritol 4-phosphate cytidylyltransferase of Syntrophus aciditrophicus (strain SB).